A 209-amino-acid chain; its full sequence is Molybdenum cofactor guanylyltransferase (209 aa).

GTP-binding positions include 14-16, lysine 31, and aspartate 104; that span reads LAG. Aspartate 104 is a Mg(2+) binding site.

It belongs to the MobA family. As to quaternary structure, monomer. Requires Mg(2+) as cofactor.

It is found in the cytoplasm. It carries out the reaction Mo-molybdopterin + GTP + H(+) = Mo-molybdopterin guanine dinucleotide + diphosphate. Transfers a GMP moiety from GTP to Mo-molybdopterin (Mo-MPT) cofactor (Moco or molybdenum cofactor) to form Mo-molybdopterin guanine dinucleotide (Mo-MGD) cofactor. The protein is Molybdenum cofactor guanylyltransferase of Helicobacter pylori (strain J99 / ATCC 700824) (Campylobacter pylori J99).